A 230-amino-acid polypeptide reads, in one-letter code: Acyl-protein thioesterase 1 (230 aa).

Residues S119, D174, and H208 each act as charge relay system in the active site. N6-acetyllysine is present on K224.

It belongs to the AB hydrolase superfamily. AB hydrolase 2 family. Homodimer. Ubiquitous. Detected at low levels in all tissues tested.

It is found in the cytoplasm. It localises to the cell membrane. The protein localises to the nucleus membrane. The protein resides in the endoplasmic reticulum. It carries out the reaction S-hexadecanoyl-L-cysteinyl-[protein] + H2O = L-cysteinyl-[protein] + hexadecanoate + H(+). The catalysed reaction is 1-hexadecanoyl-sn-glycero-3-phosphocholine + H2O = sn-glycerol 3-phosphocholine + hexadecanoate + H(+). The enzyme catalyses a 1-(9Z-octadecenoyl)-2-acyl-sn-glycero-3-phosphocholine + H2O = a 2-acyl-sn-glycero-3-phosphocholine + (9Z)-octadecenoate + H(+). Functionally, acts as an acyl-protein thioesterase. Hydrolyzes fatty acids from S-acylated cysteine residues in proteins such as trimeric G alpha proteins or HRAS. Acts as a palmitoyl thioesterase that catalyzes depalmitoylation of proteins, such as ADRB2, KCNMA1 and SQSTM1. Acts as a negative regulator of autophagy by mediating palmitoylation of SQSTM1, decreasing affinity between SQSTM1 and ATG8 proteins and recruitment of ubiquitinated cargo proteins to autophagosomes. Acts as a lysophospholipase and hydrolyzes lysophosphatidylcholine (lyso-PC). Also hydrolyzes lysophosphatidylethanolamine (lyso-PE), lysophosphatidylinositol (lyso-PI) and lysophosphatidylserine (lyso-PS). Has much higher thioesterase activity than lysophospholipase activity. Contributes to the production of lysophosphatidic acid (LPA) during blood coagulation by recognizing and cleaving plasma phospholipids to generate lysophospholipids which in turn act as substrates for ENPP2 to produce LPA. In Rattus norvegicus (Rat), this protein is Acyl-protein thioesterase 1 (Lypla1).